The chain runs to 551 residues: Cation/acetate symporter ActP (551 aa).

14 consecutive transmembrane segments (helical) span residues 8-28 (ALAA…TGAV), 35-55 (WQAI…TYWA), 78-98 (GLAI…SALV), 105-125 (GLIY…LIAE), 151-171 (LSAC…MVGA), 185-205 (VAVV…GMLA), 208-228 (WVQI…AFMV), 264-284 (ISAL…PHIL), 305-325 (GFMG…IMLV), 357-377 (LFLG…VAGL), 406-426 (VSKI…ILFE), 430-450 (IAFM…PIIL), 465-485 (VGGW…PTIW), and 496-516 (FPYE…IWVF).

This sequence belongs to the sodium:solute symporter (SSF) (TC 2.A.21) family.

Its subcellular location is the cell inner membrane. Functionally, transports acetate. The sequence is that of Cation/acetate symporter ActP from Klebsiella pneumoniae (strain 342).